Consider the following 407-residue polypeptide: MSAVPLRNGKAAASGVRQVTVLGATGSIGDSTMDLLRATPERYQVEALTANSNVAGLAKLAIEFNARFAAVADASLLGDLRAALAGTGIECGAGEGAVIEAAARPSDWVMAAVAGAAGLKPALAAVDRGATVALANKECLVCAGEFFMQRAADAQACILPADSEHNALFQALASGDRAELTKVIITASGGPFRTWAAADIEQATLAQALKHPNWSMGQKITIDSASMMNKGLEVIEAHWLFALSPDEIEVVVHPQSIIHGMVEFSDRSVVAQLGAPDMRIPIAHCLGWPDRIVGRAAALDLTKIGQLTFEAPDFARFPGLRLAYDALRAGHCATTVYNAANEIAVAAFVKEQIRFGAIARLVEETLNAWIRAGNLAPLGSADDAISVDHKARNLAATLLPQIAAKAS.

NADPH contacts are provided by T25, G26, S27, I28, N53, and N136. K137 contacts 1-deoxy-D-xylulose 5-phosphate. E138 lines the NADPH pocket. D162 contacts Mn(2+). 4 residues coordinate 1-deoxy-D-xylulose 5-phosphate: S163, E164, S188, and H211. E164 provides a ligand contact to Mn(2+). NADPH is bound at residue G217. Residues S224, N229, K230, and E233 each coordinate 1-deoxy-D-xylulose 5-phosphate. E233 contributes to the Mn(2+) binding site.

Belongs to the DXR family. Requires Mg(2+) as cofactor. The cofactor is Mn(2+).

It catalyses the reaction 2-C-methyl-D-erythritol 4-phosphate + NADP(+) = 1-deoxy-D-xylulose 5-phosphate + NADPH + H(+). Its pathway is isoprenoid biosynthesis; isopentenyl diphosphate biosynthesis via DXP pathway; isopentenyl diphosphate from 1-deoxy-D-xylulose 5-phosphate: step 1/6. In terms of biological role, catalyzes the NADPH-dependent rearrangement and reduction of 1-deoxy-D-xylulose-5-phosphate (DXP) to 2-C-methyl-D-erythritol 4-phosphate (MEP). In Rhodopseudomonas palustris (strain BisA53), this protein is 1-deoxy-D-xylulose 5-phosphate reductoisomerase.